The primary structure comprises 367 residues: Zinc finger CCCH domain-containing protein 56 (367 aa).

Residues 38–80 (YNSQWNADGGGGGSSRAGSEQPPPGKKSRGGGGGEGGGNTSKS) form a disordered region. Positions 67–76 (GGGGGEGGGN) are enriched in gly residues. 3 consecutive C3H1-type zinc fingers follow at residues 87 to 114 (FFKT…HGME), 169 to 197 (AYKG…HDEQ), and 245 to 273 (NWKT…HGAA).

This Oryza sativa subsp. japonica (Rice) protein is Zinc finger CCCH domain-containing protein 56.